The primary structure comprises 187 residues: Calcium and integrin-binding family member 2 (187 aa).

3 EF-hand domains span residues 66–101, 103–138, and 144–179; these read RENP…LCES, PREL…LTKS, and EVVL…APDF. Residues aspartate 116, asparagine 118, aspartate 120, aspartate 127, aspartate 157, aspartate 159, aspartate 161, lysine 163, and aspartate 168 each coordinate Ca(2+).

As to quaternary structure, monomer. Homodimer. Interacts with WHRN and MYO7A. Interacts with ITGA2B (via C-terminus cytoplasmic tail region); the interactions are stabilized/increased in a calcium and magnesium-dependent manner. Interacts with ITGA7 (via C-terminus cytoplasmic tail region); the interactions are stabilized/increased in a calcium and magnesium-dependent manner. Interacts with TMC1. Interacts with TMC2. In terms of tissue distribution, widely expressed.

It localises to the cytoplasm. Its subcellular location is the cell projection. It is found in the stereocilium. The protein resides in the photoreceptor inner segment. The protein localises to the cilium. It localises to the photoreceptor outer segment. Its subcellular location is the cell membrane. It is found in the sarcolemma. Calcium- and integrin-binding protein that plays a role in intracellular calcium homeostasis. Acts as an auxiliary subunit of the sensory mechanoelectrical transduction (MET) channel in hair cells. Essential for mechanoelectrical transduction (MET) currents in auditory hair cells and thereby required for hearing. Regulates the function of hair cell mechanotransduction by controlling the distribution of transmembrane channel-like proteins TMC1 and TMC2, and by regulating the function of the MET channels in hair cells. Required for the maintenance of auditory hair cell stereocilia bundle morphology and function and for hair-cell survival in the cochlea. Critical for proper photoreceptor cell maintenance and function. Plays a role in intracellular calcium homeostasis by decreasing ATP-induced calcium release. The protein is Calcium and integrin-binding family member 2 (CIB2) of Homo sapiens (Human).